The chain runs to 492 residues: Protein nucleotidyltransferase YdiU (492 aa).

8 residues coordinate ATP: G94, G96, R97, K117, D129, G130, R180, and R187. D257 (proton acceptor) is an active-site residue. Mg(2+) is bound by residues N258 and D267. ATP is bound at residue D267.

Belongs to the SELO family. It depends on Mg(2+) as a cofactor. Mn(2+) serves as cofactor.

It catalyses the reaction L-seryl-[protein] + ATP = 3-O-(5'-adenylyl)-L-seryl-[protein] + diphosphate. The catalysed reaction is L-threonyl-[protein] + ATP = 3-O-(5'-adenylyl)-L-threonyl-[protein] + diphosphate. The enzyme catalyses L-tyrosyl-[protein] + ATP = O-(5'-adenylyl)-L-tyrosyl-[protein] + diphosphate. It carries out the reaction L-histidyl-[protein] + UTP = N(tele)-(5'-uridylyl)-L-histidyl-[protein] + diphosphate. It catalyses the reaction L-seryl-[protein] + UTP = O-(5'-uridylyl)-L-seryl-[protein] + diphosphate. The catalysed reaction is L-tyrosyl-[protein] + UTP = O-(5'-uridylyl)-L-tyrosyl-[protein] + diphosphate. In terms of biological role, nucleotidyltransferase involved in the post-translational modification of proteins. It can catalyze the addition of adenosine monophosphate (AMP) or uridine monophosphate (UMP) to a protein, resulting in modifications known as AMPylation and UMPylation. The polypeptide is Protein nucleotidyltransferase YdiU (Halalkalibacterium halodurans (strain ATCC BAA-125 / DSM 18197 / FERM 7344 / JCM 9153 / C-125) (Bacillus halodurans)).